Here is a 572-residue protein sequence, read N- to C-terminus: Urease subunit alpha (572 aa).

A Urease domain is found at 134–572 (GGIDAHVHMI…VSLGQLYFFS (439 aa)). Ni(2+) is bound by residues histidine 139, histidine 141, and lysine 222. An N6-carboxylysine modification is found at lysine 222. Position 224 (histidine 224) interacts with substrate. Ni(2+) is bound by residues histidine 251 and histidine 277. Catalysis depends on histidine 325, which acts as the Proton donor. Aspartate 365 contacts Ni(2+).

This sequence belongs to the metallo-dependent hydrolases superfamily. Urease alpha subunit family. Heterotrimer of UreA (gamma), UreB (beta) and UreC (alpha) subunits. Three heterotrimers associate to form the active enzyme. It depends on Ni cation as a cofactor. Post-translationally, carboxylation allows a single lysine to coordinate two nickel ions.

The protein localises to the cytoplasm. It carries out the reaction urea + 2 H2O + H(+) = hydrogencarbonate + 2 NH4(+). Its pathway is nitrogen metabolism; urea degradation; CO(2) and NH(3) from urea (urease route): step 1/1. This chain is Urease subunit alpha, found in Laribacter hongkongensis (strain HLHK9).